The sequence spans 420 residues: Gamma-glutamyl phosphate reductase (420 aa).

The protein belongs to the gamma-glutamyl phosphate reductase family.

It localises to the cytoplasm. It catalyses the reaction L-glutamate 5-semialdehyde + phosphate + NADP(+) = L-glutamyl 5-phosphate + NADPH + H(+). It participates in amino-acid biosynthesis; L-proline biosynthesis; L-glutamate 5-semialdehyde from L-glutamate: step 2/2. Functionally, catalyzes the NADPH-dependent reduction of L-glutamate 5-phosphate into L-glutamate 5-semialdehyde and phosphate. The product spontaneously undergoes cyclization to form 1-pyrroline-5-carboxylate. This chain is Gamma-glutamyl phosphate reductase, found in Streptococcus pneumoniae (strain 70585).